The following is a 946-amino-acid chain: MKPLSSPLQQYWQTVVERLPEPLADESLSAQAKSVLTFSDFVQDSVIAHPEWLTELESQPPQADEWQHYSAWWQEALSNVSDEAGLMRELRLFRRRIMVRIAWAQTLALVTEESILLQLSHLAETLIVAARDWLYDACCREWGTPCNAQGEAQPLLILGMGKLGGGELNFSSDIDLIFAWPEHGCTQGGRRELDNAQFFTRMGQRLIKVLDQPTQDGFVYRVDMRLRPFGESGPLVLSFAALEDYYQEQGRDWERYAMVKARIMGDSEGVYANELRAMLRPFVFRRYIDFSVIQSLRNMKGMIAREVRRRGLTDNIKLGAGGIREIEFIVQVFQLIRGGREPSLQSRSLLPTLSAIAELHLLSENDAEQLRVAYLFLRRLENLLQSINDEQTQTLPSDELNRARLAWAMDFADWQQLTGALIGHMTNVRRVFNELIGDDESETQEESLSEQWRELWQDALQEDDTTPVLAHLSEDDRKQVLTLIADFRKELDKRTIGPRGRQVLDHLMPHLLRDVCTREDAAVTLSRITALLVGIVTRTTYLELLSEFPAALKHLISLCAASPMIASQLARYPLLLDELLDPNTLYQPTATDAYRDELRQYLLRVPEDDEEQQLEALRQFKQAQLLRIAAADIAGTLPVMKVSDHLTWLAEAMIDAVVQQAWVQMVARYGKPNHLNEREGRGFAVVGYGKLGGWELGYSSDLDLIFLHDCPMDAMTDGEREIDGRQFYLRLAQRIMHLFSTRTSSGILYEVDARLRPSGAAGMLVTSAEAFADYQKNEAWTWEHQALVRARVVYGDPQLTAHFDAVRREIMTLPREGKTLQTEVREMREKMRAHLGNKHRDRFDIKADEGGITDIEFITQYLVLRYAHEKPKLTRWSDNVRILELLAQNDIMEEQEAMALTRAYTTLRDELHHLALQELPGHVPEDCFTAEREQVRVSWQKWLVEE.

The interval 1 to 440 (MKPLSSPLQQ…VFNELIGDDE (440 aa)) is adenylyl removase. Positions 449 to 946 (SEQWRELWQD…VSWQKWLVEE (498 aa)) are adenylyl transferase.

The protein belongs to the GlnE family. Mg(2+) is required as a cofactor.

It carries out the reaction [glutamine synthetase]-O(4)-(5'-adenylyl)-L-tyrosine + phosphate = [glutamine synthetase]-L-tyrosine + ADP. The catalysed reaction is [glutamine synthetase]-L-tyrosine + ATP = [glutamine synthetase]-O(4)-(5'-adenylyl)-L-tyrosine + diphosphate. Functionally, involved in the regulation of glutamine synthetase GlnA, a key enzyme in the process to assimilate ammonia. When cellular nitrogen levels are high, the C-terminal adenylyl transferase (AT) inactivates GlnA by covalent transfer of an adenylyl group from ATP to specific tyrosine residue of GlnA, thus reducing its activity. Conversely, when nitrogen levels are low, the N-terminal adenylyl removase (AR) activates GlnA by removing the adenylyl group by phosphorolysis, increasing its activity. The regulatory region of GlnE binds the signal transduction protein PII (GlnB) which indicates the nitrogen status of the cell. The chain is Bifunctional glutamine synthetase adenylyltransferase/adenylyl-removing enzyme from Escherichia coli (strain SMS-3-5 / SECEC).